Consider the following 315-residue polypeptide: MHAASAFTLSGRDLLGIEGLIASEITGLLDLAEEFVELNRQIEKKRTTLRGRTQINLFSEASTRTQSSFEIAGKRLGADVMNMSVGSSSVKKGETLIDTAITLNAMHPDILVVRHHASGAVALLARKVDCCVVNAGDGAHEHPTQALLDALTIRRNKGRIAGLTVAICGDVLHSRVARSNIILLHTLGAKVRLVAPSTLLPAGIESLGVEVFRTMEEGLKDADIVMMLRLQRERMAGSFIPSVKEYFHYFGLDEAKLRHAAPDALVMHPGPMNRGVEIDSAVADGPRSLIREQVEMGVAVRMAVLDTLARKLPNA.

Carbamoyl phosphate is bound by residues R64 and T65. K92 serves as a coordination point for L-aspartate. The carbamoyl phosphate site is built by R114, H142, and Q145. R175 and R229 together coordinate L-aspartate. Carbamoyl phosphate-binding residues include G270 and P271.

This sequence belongs to the aspartate/ornithine carbamoyltransferase superfamily. ATCase family. As to quaternary structure, heterododecamer (2C3:3R2) of six catalytic PyrB chains organized as two trimers (C3), and six regulatory PyrI chains organized as three dimers (R2).

The enzyme catalyses carbamoyl phosphate + L-aspartate = N-carbamoyl-L-aspartate + phosphate + H(+). It functions in the pathway pyrimidine metabolism; UMP biosynthesis via de novo pathway; (S)-dihydroorotate from bicarbonate: step 2/3. In terms of biological role, catalyzes the condensation of carbamoyl phosphate and aspartate to form carbamoyl aspartate and inorganic phosphate, the committed step in the de novo pyrimidine nucleotide biosynthesis pathway. This chain is Aspartate carbamoyltransferase catalytic subunit, found in Xanthobacter autotrophicus (strain ATCC BAA-1158 / Py2).